We begin with the raw amino-acid sequence, 88 residues long: Putative membrane protein insertion efficiency factor (88 aa).

It belongs to the UPF0161 family.

The protein resides in the cell inner membrane. Functionally, could be involved in insertion of integral membrane proteins into the membrane. This Coxiella burnetii (strain Dugway 5J108-111) protein is Putative membrane protein insertion efficiency factor.